Here is a 350-residue protein sequence, read N- to C-terminus: Ribonuclease H2 subunit B (350 aa).

The span at Gln134 to Lys151 shows a compositional bias: polar residues. The segment at Gln134–Asn153 is disordered.

It belongs to the RNase H2 subunit B family. Highly divergent. As to quaternary structure, the RNase 2 complex is a heterotrimer composed of the catalytic subunit RNH201 and of the non-catalytic subunits RNH202 and RNH203.

Its subcellular location is the nucleus. Non catalytic subunit of RNase H2, an endonuclease that specifically degrades the RNA of RNA:DNA hybrids. Participates in DNA replication, possibly by mediating the removal of lagging-strand Okazaki fragment RNA primers during DNA replication. Mediates the excision of single ribonucleotides from DNA:RNA duplexes. This chain is Ribonuclease H2 subunit B (RNH202), found in Saccharomyces cerevisiae (strain ATCC 204508 / S288c) (Baker's yeast).